Consider the following 229-residue polypeptide: Ribonuclease 3 (229 aa).

Positions 5–127 (LSRLERKLGH…LIGAIYLDAG (123 aa)) constitute an RNase III domain. Glutamate 40 lines the Mg(2+) pocket. The active site involves aspartate 44. Residues aspartate 113 and glutamate 116 each contribute to the Mg(2+) site. Glutamate 116 is a catalytic residue. The 71-residue stretch at 154 to 224 (DPKTRLQEFL…AAAALIALGV (71 aa)) folds into the DRBM domain.

The protein belongs to the ribonuclease III family. As to quaternary structure, homodimer. Mg(2+) is required as a cofactor.

The protein localises to the cytoplasm. It catalyses the reaction Endonucleolytic cleavage to 5'-phosphomonoester.. In terms of biological role, digests double-stranded RNA. Involved in the processing of primary rRNA transcript to yield the immediate precursors to the large and small rRNAs (23S and 16S). Processes some mRNAs, and tRNAs when they are encoded in the rRNA operon. Processes pre-crRNA and tracrRNA of type II CRISPR loci if present in the organism. This Ectopseudomonas mendocina (strain ymp) (Pseudomonas mendocina) protein is Ribonuclease 3.